A 336-amino-acid polypeptide reads, in one-letter code: MAAAAAGPASSQRLFQSFSDALIDGDPQAALEELTKALEQNPDDAQYYCQRAYCHILLGKYRDGIADVKKSLELNPNNCTALLRKGICEYHEKDYASALETFAEGQKLDSTDTNFDTWIKRCQEIQNGSESEVSASQRTQSKIKYDWYQTESHVIITLMIKSVQKNDVRVGFSERELSALVKIPAGEDYSLKLRLLHPIIPEQSTFKVLSTKIEIKMKKPEAVRWEKLEGQGDEPTPKQFTADVKNMYPSSSHYTRNWDKLVGEIKEEEKNEKLEGDAALNKLFQQIYSDGSDEVKRAMNKSFMESGGTVLSTNWSDVGKRKVEINPPDDMEWKQY.

An N-acetylalanine modification is found at A2. TPR repeat units lie at residues 11-44 (SQRLFQSFSDALIDGDPQAALEELTKALEQNPDD), 45-78 (AQYYCQRAYCHILLGKYRDGIADVKKSLELNPNN), and 79-112 (CTALLRKGICEYHEKDYASALETFAEGQKLDSTD). The 90-residue stretch at 140-229 (QSKIKYDWYQ…PEAVRWEKLE (90 aa)) folds into the CS domain. The residue at position 236 (T236) is a Phosphothreonine. An SGS domain is found at 247 to 336 (MYPSSSHYTR…PPDDMEWKQY (90 aa)). At S252 the chain carries Phosphoserine. T255 is subject to Phosphothreonine. K266 is covalently cross-linked (Glycyl lysine isopeptide (Lys-Gly) (interchain with G-Cter in SUMO1); alternate). A Glycyl lysine isopeptide (Lys-Gly) (interchain with G-Cter in SUMO2); alternate cross-link involves residue K266. The residue at position 302 (S302) is a Phosphoserine.

It belongs to the SGT1 family. As to quaternary structure, probably associates with SCF (SKP1-CUL1-F-box protein) complex through interaction with SKP1. Interacts with S100A6. Interacts with HSP90. Post-translationally, phosphorylated at Ser-252 and Ser-302, dephosphorylation promotes nuclear translocation, most likely due to disruption of the SUGT1-HSP90 complex.

It is found in the cytoplasm. It localises to the nucleus. Functionally, may play a role in ubiquitination and subsequent proteasomal degradation of target proteins. The protein is Protein SGT1 homolog of Mus musculus (Mouse).